We begin with the raw amino-acid sequence, 173 residues long: Large ribosomal subunit protein uL16 (173 aa).

It belongs to the universal ribosomal protein uL16 family.

The sequence is that of Large ribosomal subunit protein uL16 from Methanosarcina acetivorans (strain ATCC 35395 / DSM 2834 / JCM 12185 / C2A).